Here is a 364-residue protein sequence, read N- to C-terminus: Protein RecA (364 aa).

Glycine 77–threonine 84 is a binding site for ATP. Residues aspartate 343–methionine 364 form a disordered region. Positions aspartate 352–methionine 364 are enriched in acidic residues.

It belongs to the RecA family.

The protein localises to the cytoplasm. Its function is as follows. Can catalyze the hydrolysis of ATP in the presence of single-stranded DNA, the ATP-dependent uptake of single-stranded DNA by duplex DNA, and the ATP-dependent hybridization of homologous single-stranded DNAs. It interacts with LexA causing its activation and leading to its autocatalytic cleavage. This is Protein RecA from Rhizobium johnstonii (strain DSM 114642 / LMG 32736 / 3841) (Rhizobium leguminosarum bv. viciae).